The chain runs to 225 residues: Cytidylate kinase (225 aa).

Position 11 to 19 (11 to 19) interacts with ATP; sequence GPAAAGKST.

It belongs to the cytidylate kinase family. Type 1 subfamily.

The protein resides in the cytoplasm. It catalyses the reaction CMP + ATP = CDP + ADP. The enzyme catalyses dCMP + ATP = dCDP + ADP. The chain is Cytidylate kinase from Anoxybacillus flavithermus (strain DSM 21510 / WK1).